A 172-amino-acid chain; its full sequence is MLLLPPRPPHPRSSSPEAMDPPPPKAPPFPKAEGPSSTPSSAAGPRPPRLGRHLLIDANGVPYTYTVQLEEEPRGPPQREAPPGEPGPRKGYSCPECARVFASPLRLQSHRVSHSDLKPFTCGACGKAFKRSSHLSRHRATHRARAGPPHTCPLCPRRFQDAAELAQHVRLH.

The disordered stretch occupies residues 1–93; that stretch reads MLLLPPRPPH…GEPGPRKGYS (93 aa). Residues 19–30 show a composition bias toward pro residues; the sequence is MDPPPPKAPPFP. Residue Lys-31 forms a Glycyl lysine isopeptide (Lys-Gly) (interchain with G-Cter in SUMO2) linkage. Positions 31-44 are enriched in low complexity; it reads KAEGPSSTPSSAAG. Residues 75–86 show a composition bias toward pro residues; that stretch reads GPPQREAPPGEP. A C2H2-type 1 zinc finger spans residues 92 to 114; the sequence is YSCPECARVFASPLRLQSHRVSH. Lys-118 participates in a covalent cross-link: Glycyl lysine isopeptide (Lys-Gly) (interchain with G-Cter in SUMO2). 2 consecutive C2H2-type zinc fingers follow at residues 120–142 and 150–172; these read FTCGACGKAFKRSSHLSRHRATH and HTCPLCPRRFQDAAELAQHVRLH.

In terms of assembly, interacts with SMAD2. In terms of tissue distribution, expressed in endothelial cells.

It is found in the nucleus. Involved in the regulation of endothelial cell proliferation and migration. Mediates H(2)O(2)-induced leukocyte chemotaxis by elevating interleukin-8 production and may play a role in inflammation. May be involved in transcriptional regulation. The polypeptide is Zinc finger protein 580 (ZNF580) (Homo sapiens (Human)).